The following is a 697-amino-acid chain: Glycine--tRNA ligase beta subunit (697 aa).

The protein belongs to the class-II aminoacyl-tRNA synthetase family. In terms of assembly, tetramer of two alpha and two beta subunits.

It is found in the cytoplasm. It carries out the reaction tRNA(Gly) + glycine + ATP = glycyl-tRNA(Gly) + AMP + diphosphate. The polypeptide is Glycine--tRNA ligase beta subunit (Solidesulfovibrio magneticus (strain ATCC 700980 / DSM 13731 / RS-1) (Desulfovibrio magneticus)).